Consider the following 131-residue polypeptide: MSWQAYVDDHLLCDIEGQHLSAAAIVGHDGSVWAQSENFPELKPEEVAGMIKDFDEPGTLAPTGLFVGGTKYMVIQGEPGVVIRGKKGTGGITIKKTGMSLIIGIYDEPMTPGQCNMVVERLGDYLIEQGF.

C13 and C115 form a disulfide bridge. The Involved in PIP2 interaction signature appears at 81 to 97 (VVIRGKKGTGGITIKKT). Residue T111 is modified to Phosphothreonine.

The protein belongs to the profilin family. As to quaternary structure, multimer. Occurs in many kinds of cells as a complex with monomeric actin in a 1:1 ratio. Phosphorylated by MAP kinases. As to expression, expressed in vegetative tissues. Present in shoots, roots and coleoptiles. Also detected in endosperm and pollen.

Its subcellular location is the cytoplasm. The protein localises to the cytoskeleton. Actin binding is enhanced by calcium Ca(2+). Binds to actin and affects the structure of the cytoskeleton. At high concentrations, profilin prevents the polymerization of actin, whereas it enhances it at low concentrations. By binding to PIP2, it inhibits the formation of IP3 and DG. Has a high affinity for poly-proline. In Zea mays (Maize), this protein is Profilin-5.